Reading from the N-terminus, the 418-residue chain is F420-non-reducing hydrogenase vhu subunit A (418 aa).

2 residues coordinate Ni(2+): Cys-61 and Cys-64.

This sequence belongs to the [NiFe]/[NiFeSe] hydrogenase large subunit family. The F420-non-reducing hydrogenase vhu is composed of four subunits; VhuA, VhuD, VhuG and VhuU. It depends on Ni(2+) as a cofactor.

The chain is F420-non-reducing hydrogenase vhu subunit A (vhuA) from Methanocaldococcus jannaschii (strain ATCC 43067 / DSM 2661 / JAL-1 / JCM 10045 / NBRC 100440) (Methanococcus jannaschii).